The sequence spans 416 residues: Serine/threonine-protein phosphatase PP2A-like PPG1 (416 aa).

4 residues coordinate Mn(2+): Asp-62, His-64, Asp-90, and Asn-122. Catalysis depends on His-123, which acts as the Proton donor. The Mn(2+) site is built by His-173 and His-248. The interval 363–391 is disordered; that stretch reads EDTLQGKSVNGINFDDELSTSDDTSGSGG.

The protein belongs to the PPP phosphatase family. PP-2A subfamily. Requires Mn(2+) as cofactor.

The enzyme catalyses O-phospho-L-seryl-[protein] + H2O = L-seryl-[protein] + phosphate. It catalyses the reaction O-phospho-L-threonyl-[protein] + H2O = L-threonyl-[protein] + phosphate. Its activity is regulated as follows. Inhibited by okadaic acid, a specific inhibitor of serine/threonine phosphatases of types 1, 2A and 2B. Serine/threonine-protein phosphatase that plays an important role in controlling colony morphology, filament extension and agar invasion. Down-regulates expression of NRG1 and affects the expression of multiple filament-specific transcripts in response to serum and 37 degrees Celsius. Plays a crucial role in virulence in a mouse model of systemic candidiasis. The protein is Serine/threonine-protein phosphatase PP2A-like PPG1 of Candida albicans (strain SC5314 / ATCC MYA-2876) (Yeast).